A 372-amino-acid polypeptide reads, in one-letter code: MEEKQHYSPGLDGVIAAETHISYLDTQSSQILIRGYDLIELSETKSYLELVHLLLEGRLPEESEMETLERKINSASSLPADHLRLLELLPEDTHPMDGLRTGLSALAGYDRQIDDRSPSANKERAYQLLGKMPALTAASYRIINKKEPILPLQTLSYSANFLYMMTGKLPSSLEEQIFDRSLVLYSEHEMPNSTFAARVIASTHSDLYGALTGAVASLKGNLHGGANEAVMYLLLEAKTTSDFEQLLQTKLKRKEKIMGFGHRVYMKKMDPRALMMKEALQQLCDKAGDHRLYEMCEAGERLMEKEKGLYPNLDYYAAPVYWMLGIPIPLYTPIFFSARTSGLCAHVIEQHANNRLFRPRVSYMGPRYQTKS.

Residue His-188 participates in substrate binding. The active site involves His-223. 256–260 (KIMGF) provides a ligand contact to CoA. The active site involves His-262. Arg-272 contacts substrate. The active site involves Asp-314. Arg-339 and Arg-358 together coordinate substrate.

The protein belongs to the citrate synthase family.

It catalyses the reaction propanoyl-CoA + oxaloacetate + H2O = 2-methylcitrate + CoA + H(+). The enzyme catalyses oxaloacetate + acetyl-CoA + H2O = citrate + CoA + H(+). Its pathway is carbohydrate metabolism; tricarboxylic acid cycle; isocitrate from oxaloacetate: step 1/2. In terms of biological role, involved in both the tricarboxylic acid (TCA) and methylcitric acid cycles. Has both 2-methylcitrate synthase and citrate synthase activities. Catalyzes the condensation of propionyl-CoA and oxaloacetate to yield 2-methylcitrate (2-MC) and CoA, and the condensation of acetyl-CoA and oxaloacetate to yield citrate and CoA. Has 2.3-fold higher activity as a 2-methylcitrate synthase. Catalyzes the formation of either (2S,3R)- or (2R,3S)-2-methylcitrate. The protein is Citrate/2-methylcitrate synthase of Bacillus subtilis (strain 168).